Reading from the N-terminus, the 526-residue chain is Dye-decolorizing peroxidase (526 aa).

The signal sequence occupies residues 1 to 21 (MRKSISTFILLSVLSVGQLVA). A propeptide spanning residues 22–63 (ARPRSTNAPPRRRTPQPRRTTSLFINPPALPDLPTVQAVDKL) is cleaved from the precursor. An N-linked (GlcNAc...) asparagine glycan is attached at N186. D231 serves as the catalytic Proton acceptor. Residue N367 is glycosylated (N-linked (GlcNAc...) asparagine). H376 contacts heme. 2 N-linked (GlcNAc...) asparagine glycosylation sites follow: N473 and N484.

This sequence belongs to the DyP-type peroxidase family. It depends on heme b as a cofactor.

The protein localises to the secreted. The catalysed reaction is Reactive Blue 5 + 2 H2O2 = 2,2'-disulfonyl azobenzene + 3-[(4-amino-6-chloro-1,3,5-triazin-2-yl)amino]benzenesulfonate + phthalate + 2 H2O + 2 H(+). It carries out the reaction 2 a phenolic donor + H2O2 = 2 a phenolic radical donor + 2 H2O. In terms of biological role, manganese-independent peroxidase that is able to convert a large number of compounds, but its physiological substrate is not known. In addition to classic peroxidase substrates (e.g. 2,6-dimethoxyphenol), oxidizes dyes such as Reactive Blue 5 and Reactive Black 5. The protein is Dye-decolorizing peroxidase of Mycena epipterygia (Yellow-stemmed mycena).